The chain runs to 169 residues: Putative tRNA (cytidine(34)-2'-O)-methyltransferase (169 aa).

Val79, Gly104, Ile125, and Ser134 together coordinate S-adenosyl-L-methionine.

The protein belongs to the class IV-like SAM-binding methyltransferase superfamily. RNA methyltransferase TrmH family. TrmL subfamily.

It localises to the cytoplasm. It catalyses the reaction cytidine(34) in tRNA + S-adenosyl-L-methionine = 2'-O-methylcytidine(34) in tRNA + S-adenosyl-L-homocysteine + H(+). The enzyme catalyses 5-carboxymethylaminomethyluridine(34) in tRNA(Leu) + S-adenosyl-L-methionine = 5-carboxymethylaminomethyl-2'-O-methyluridine(34) in tRNA(Leu) + S-adenosyl-L-homocysteine + H(+). Could methylate the ribose at the nucleotide 34 wobble position in tRNA. The chain is Putative tRNA (cytidine(34)-2'-O)-methyltransferase from Lactococcus lactis subsp. cremoris (strain MG1363).